The primary structure comprises 212 residues: ATP phosphoribosyltransferase (212 aa).

The protein belongs to the ATP phosphoribosyltransferase family. Short subfamily. As to quaternary structure, heteromultimer composed of HisG and HisZ subunits.

It localises to the cytoplasm. The catalysed reaction is 1-(5-phospho-beta-D-ribosyl)-ATP + diphosphate = 5-phospho-alpha-D-ribose 1-diphosphate + ATP. It functions in the pathway amino-acid biosynthesis; L-histidine biosynthesis; L-histidine from 5-phospho-alpha-D-ribose 1-diphosphate: step 1/9. Its function is as follows. Catalyzes the condensation of ATP and 5-phosphoribose 1-diphosphate to form N'-(5'-phosphoribosyl)-ATP (PR-ATP). Has a crucial role in the pathway because the rate of histidine biosynthesis seems to be controlled primarily by regulation of HisG enzymatic activity. This is ATP phosphoribosyltransferase from Clostridium botulinum (strain Langeland / NCTC 10281 / Type F).